The sequence spans 145 residues: Nucleoside diphosphate kinase (145 aa).

Positions 11, 59, 87, 93, 104, and 114 each coordinate ATP. Histidine 117 (pros-phosphohistidine intermediate) is an active-site residue.

Belongs to the NDK family. Homotetramer. It depends on Mg(2+) as a cofactor.

Its subcellular location is the cytoplasm. It carries out the reaction a 2'-deoxyribonucleoside 5'-diphosphate + ATP = a 2'-deoxyribonucleoside 5'-triphosphate + ADP. The catalysed reaction is a ribonucleoside 5'-diphosphate + ATP = a ribonucleoside 5'-triphosphate + ADP. Major role in the synthesis of nucleoside triphosphates other than ATP. The ATP gamma phosphate is transferred to the NDP beta phosphate via a ping-pong mechanism, using a phosphorylated active-site intermediate. The chain is Nucleoside diphosphate kinase from Myxococcus xanthus.